Reading from the N-terminus, the 330-residue chain is Glycerol-3-phosphate dehydrogenase [NAD(P)+] (330 aa).

Residues W13, R33, and K103 each contribute to the NADPH site. Residues K103, G131, and T133 each coordinate sn-glycerol 3-phosphate. A135 is a binding site for NADPH. Residues K186, D239, S249, R250, and N251 each contribute to the sn-glycerol 3-phosphate site. Residue K186 is the Proton acceptor of the active site. Position 250 (R250) interacts with NADPH. 2 residues coordinate NADPH: V274 and E276.

Belongs to the NAD-dependent glycerol-3-phosphate dehydrogenase family.

The protein localises to the cytoplasm. It catalyses the reaction sn-glycerol 3-phosphate + NAD(+) = dihydroxyacetone phosphate + NADH + H(+). The catalysed reaction is sn-glycerol 3-phosphate + NADP(+) = dihydroxyacetone phosphate + NADPH + H(+). It functions in the pathway membrane lipid metabolism; glycerophospholipid metabolism. Catalyzes the reduction of the glycolytic intermediate dihydroxyacetone phosphate (DHAP) to sn-glycerol 3-phosphate (G3P), the key precursor for phospholipid synthesis. The chain is Glycerol-3-phosphate dehydrogenase [NAD(P)+] from Erythrobacter litoralis (strain HTCC2594).